A 91-amino-acid chain; its full sequence is Small ribosomal subunit protein uS19 (91 aa).

A disordered region spans residues 1–32; it reads MPRSIKKGPFIDEHLDRKVQSAQASNSRRPIK. The segment covering 9–19 has biased composition (basic and acidic residues); the sequence is PFIDEHLDRKV.

This sequence belongs to the universal ribosomal protein uS19 family.

Its function is as follows. Protein S19 forms a complex with S13 that binds strongly to the 16S ribosomal RNA. The sequence is that of Small ribosomal subunit protein uS19 from Acidithiobacillus ferrooxidans (strain ATCC 53993 / BNL-5-31) (Leptospirillum ferrooxidans (ATCC 53993)).